The primary structure comprises 164 residues: Phosphopantetheine adenylyltransferase (164 aa).

Ser11 contacts substrate. ATP is bound by residues Ser11 to Phe12 and His19. 3 residues coordinate substrate: Lys43, Ala76, and Arg90. Residues Gly91–Arg93, Glu101, and Tyr126–Ser132 each bind ATP.

It belongs to the bacterial CoaD family. As to quaternary structure, homohexamer. Mg(2+) is required as a cofactor.

Its subcellular location is the cytoplasm. It carries out the reaction (R)-4'-phosphopantetheine + ATP + H(+) = 3'-dephospho-CoA + diphosphate. Its pathway is cofactor biosynthesis; coenzyme A biosynthesis; CoA from (R)-pantothenate: step 4/5. Reversibly transfers an adenylyl group from ATP to 4'-phosphopantetheine, yielding dephospho-CoA (dPCoA) and pyrophosphate. In Streptococcus sanguinis (strain SK36), this protein is Phosphopantetheine adenylyltransferase.